Here is a 384-residue protein sequence, read N- to C-terminus: Glutamate 5-kinase (384 aa).

Position 24 (Lys24) interacts with ATP. Substrate contacts are provided by Ser64, Asp149, and Asn161. Residues 181–182 (TD) and 223–229 (TGGMRTK) each bind ATP. One can recognise a PUA domain in the interval 288–370 (PGAILIDAGA…RDIQPLLGYT (83 aa)).

The protein belongs to the glutamate 5-kinase family.

It localises to the cytoplasm. It carries out the reaction L-glutamate + ATP = L-glutamyl 5-phosphate + ADP. The protein operates within amino-acid biosynthesis; L-proline biosynthesis; L-glutamate 5-semialdehyde from L-glutamate: step 1/2. Its function is as follows. Catalyzes the transfer of a phosphate group to glutamate to form L-glutamate 5-phosphate. This is Glutamate 5-kinase from Xylella fastidiosa (strain 9a5c).